We begin with the raw amino-acid sequence, 275 residues long: NifU-like protein 5, mitochondrial (275 aa).

The transit peptide at 1–61 (MKGLTRLLNS…TNASRNCSRS (61 aa)) directs the protein to the mitochondrion.

Belongs to the NifU family.

Its subcellular location is the mitochondrion. Functionally, molecular scaffold for [Fe-S] cluster assembly of mitochondrial iron-sulfur proteins. The polypeptide is NifU-like protein 5, mitochondrial (NIFU5) (Arabidopsis thaliana (Mouse-ear cress)).